We begin with the raw amino-acid sequence, 161 residues long: Large ribosomal subunit protein uL11 (161 aa).

This sequence belongs to the universal ribosomal protein uL11 family. In terms of assembly, part of the ribosomal stalk of the 50S ribosomal subunit. Interacts with L10 and the large rRNA to form the base of the stalk. L10 forms an elongated spine to which L12 dimers bind in a sequential fashion forming a multimeric L10(L12)X complex.

In terms of biological role, forms part of the ribosomal stalk which helps the ribosome interact with GTP-bound translation factors. The chain is Large ribosomal subunit protein uL11 from Methanosarcina barkeri (strain Fusaro / DSM 804).